The primary structure comprises 187 residues: Benzene 1,2-dioxygenase subunit beta (187 aa).

This sequence belongs to the bacterial ring-hydroxylating dioxygenase beta subunit family. As to quaternary structure, this dioxygenase system consists of four proteins: the two subunits of the hydroxylase component (BedC1 and BedC2), a ferredoxin (BedB) and a ferredoxin reductase (BedA).

It carries out the reaction benzene + NADH + O2 + H(+) = cis-1,2-dihydrobenzene-1,2-diol + NAD(+). It participates in aromatic compound metabolism; benzene degradation; catechol from benzene: step 1/2. Its function is as follows. The beta subunit may be responsible for the substrate specificity of the enzyme. This chain is Benzene 1,2-dioxygenase subunit beta (bedC2), found in Pseudomonas putida (Arthrobacter siderocapsulatus).